A 486-amino-acid chain; its full sequence is N-succinylglutamate 5-semialdehyde dehydrogenase (486 aa).

220–225 (GSSRTG) contributes to the NAD(+) binding site. Catalysis depends on residues Glu-243 and Cys-277.

The protein belongs to the aldehyde dehydrogenase family. AstD subfamily.

The catalysed reaction is N-succinyl-L-glutamate 5-semialdehyde + NAD(+) + H2O = N-succinyl-L-glutamate + NADH + 2 H(+). The protein operates within amino-acid degradation; L-arginine degradation via AST pathway; L-glutamate and succinate from L-arginine: step 4/5. In terms of biological role, catalyzes the NAD-dependent reduction of succinylglutamate semialdehyde into succinylglutamate. The sequence is that of N-succinylglutamate 5-semialdehyde dehydrogenase from Shewanella putrefaciens (strain CN-32 / ATCC BAA-453).